Here is a 478-residue protein sequence, read N- to C-terminus: ATP synthase subunit beta (478 aa).

158-165 (GGAGVGKT) provides a ligand contact to ATP.

The protein belongs to the ATPase alpha/beta chains family. In terms of assembly, F-type ATPases have 2 components, CF(1) - the catalytic core - and CF(0) - the membrane proton channel. CF(1) has five subunits: alpha(3), beta(3), gamma(1), delta(1), epsilon(1). CF(0) has three main subunits: a(1), b(2) and c(9-12). The alpha and beta chains form an alternating ring which encloses part of the gamma chain. CF(1) is attached to CF(0) by a central stalk formed by the gamma and epsilon chains, while a peripheral stalk is formed by the delta and b chains.

Its subcellular location is the cell inner membrane. The catalysed reaction is ATP + H2O + 4 H(+)(in) = ADP + phosphate + 5 H(+)(out). In terms of biological role, produces ATP from ADP in the presence of a proton gradient across the membrane. The catalytic sites are hosted primarily by the beta subunits. The chain is ATP synthase subunit beta from Rhizobium leguminosarum bv. trifolii (strain WSM2304).